A 512-amino-acid chain; its full sequence is UDP-N-acetylmuramate--L-alanine ligase (512 aa).

Residue 132–138 coordinates ATP; it reads GAHGKTT.

Belongs to the MurCDEF family.

The protein localises to the cytoplasm. The enzyme catalyses UDP-N-acetyl-alpha-D-muramate + L-alanine + ATP = UDP-N-acetyl-alpha-D-muramoyl-L-alanine + ADP + phosphate + H(+). It participates in cell wall biogenesis; peptidoglycan biosynthesis. Its function is as follows. Cell wall formation. The chain is UDP-N-acetylmuramate--L-alanine ligase from Bifidobacterium longum subsp. infantis (strain ATCC 15697 / DSM 20088 / JCM 1222 / NCTC 11817 / S12).